The sequence spans 541 residues: Berberine bridge enzyme-like 1 (541 aa).

The N-terminal stretch at 1 to 20 is a signal peptide; the sequence is MKLSCLVFLIVSSLVSSSLA. N-linked (GlcNAc...) asparagine glycans are attached at residues asparagine 25, asparagine 38, asparagine 73, asparagine 136, asparagine 302, asparagine 339, and asparagine 357. A disulfide bridge links cysteine 35 with cysteine 98. The FAD-binding PCMH-type domain occupies 76–255; it reads TSPKPLLVIA…LSFKIKLVPV (180 aa). A cross-link (6-(S-cysteinyl)-8alpha-(pros-histidyl)-FAD (His-Cys)) is located at residues 113 to 180; that stretch reads HDYDGVSYIS…GTHGFPAGVC (68 aa).

Belongs to the oxygen-dependent FAD-linked oxidoreductase family. It depends on FAD as a cofactor. The FAD cofactor is bound via a bicovalent 6-S-cysteinyl, 8alpha-N1-histidyl FAD linkage. As to expression, accumulates in cell walls of etiolated hypocotyls.

It localises to the secreted. The protein resides in the cell wall. In Arabidopsis thaliana (Mouse-ear cress), this protein is Berberine bridge enzyme-like 1.